A 352-amino-acid polypeptide reads, in one-letter code: Small ribosomal subunit biogenesis GTPase RsgA (352 aa).

Residues 109 to 277 enclose the CP-type G domain; the sequence is DTVLKRPDMY…LIDSPGIREF (169 aa). GTP contacts are provided by residues 165-168 and 219-227; these read NKAD and GQSGVGKSS. Residues Cys301, Cys306, His308, and Cys314 each coordinate Zn(2+).

The protein belongs to the TRAFAC class YlqF/YawG GTPase family. RsgA subfamily. As to quaternary structure, monomer. Associates with 30S ribosomal subunit, binds 16S rRNA. The cofactor is Zn(2+).

The protein localises to the cytoplasm. In terms of biological role, one of several proteins that assist in the late maturation steps of the functional core of the 30S ribosomal subunit. Helps release RbfA from mature subunits. May play a role in the assembly of ribosomal proteins into the subunit. Circularly permuted GTPase that catalyzes slow GTP hydrolysis, GTPase activity is stimulated by the 30S ribosomal subunit. The chain is Small ribosomal subunit biogenesis GTPase RsgA from Alcanivorax borkumensis (strain ATCC 700651 / DSM 11573 / NCIMB 13689 / SK2).